The sequence spans 147 residues: Protein SprT-like (147 aa).

Residues 5 to 142 form the SprT-like domain; sequence DYVNEVSLED…SFCRGHLKEI (138 aa). His64 provides a ligand contact to Zn(2+). Glu65 is a catalytic residue. A Zn(2+)-binding site is contributed by His68.

The protein belongs to the SprT family. Zn(2+) is required as a cofactor.

The protein localises to the cytoplasm. This is Protein SprT-like from Streptococcus uberis (strain ATCC BAA-854 / 0140J).